We begin with the raw amino-acid sequence, 331 residues long: Anthranilate phosphoribosyltransferase (331 aa).

5-phospho-alpha-D-ribose 1-diphosphate is bound by residues glycine 79, 82–83 (GD), serine 87, 89–92 (NIST), 107–115 (KHCNSSISG), and serine 119. Glycine 79 serves as a coordination point for anthranilate. Mg(2+) is bound at residue serine 91. Asparagine 110 is a binding site for anthranilate. Arginine 165 lines the anthranilate pocket. The Mg(2+) site is built by aspartate 223 and glutamate 224.

This sequence belongs to the anthranilate phosphoribosyltransferase family. In terms of assembly, homodimer. Mg(2+) is required as a cofactor.

It carries out the reaction N-(5-phospho-beta-D-ribosyl)anthranilate + diphosphate = 5-phospho-alpha-D-ribose 1-diphosphate + anthranilate. It functions in the pathway amino-acid biosynthesis; L-tryptophan biosynthesis; L-tryptophan from chorismate: step 2/5. In terms of biological role, catalyzes the transfer of the phosphoribosyl group of 5-phosphorylribose-1-pyrophosphate (PRPP) to anthranilate to yield N-(5'-phosphoribosyl)-anthranilate (PRA). This chain is Anthranilate phosphoribosyltransferase, found in Buchnera aphidicola subsp. Melaphis rhois.